A 390-amino-acid polypeptide reads, in one-letter code: Zinc transporter 7-B (390 aa).

Over 1-37 the chain is Cytoplasmic; the sequence is MLPLSIKDDEYKPPKFNLVRKVSGWIRSIFSDSTSRN. The helical transmembrane segment at 38–58 threads the bilayer; sequence LFCFLCLNLSFAFVELFYGIW. Residues 59–67 lie on the Lumenal side of the membrane; the sequence is SNSLGLISD. A helical membrane pass occupies residues 68–88; the sequence is SFHMFFDCTALLAGLAASVIS. The Cytoplasmic portion of the chain corresponds to 89–102; sequence RWKTNETFSYGYVR. A helical membrane pass occupies residues 103–123; sequence AEVLAGFVNGLFLIFTAFFIF. Residues 124–140 lie on the Lumenal side of the membrane; that stretch reads SEGIERALDTPEVHHER. A helical transmembrane segment spans residues 141–161; it reads LLPVSIMGFLVNLIGIFVFQH. A his-rich loop region spans residues 161–226; it reads HGGGHGHSHE…GHDHSHKHGH (66 aa). Residues 162–250 are Cytoplasmic-facing; that stretch reads GGGHGHSHES…KGSSKQILEG (89 aa). The tract at residues 166 to 243 is disordered; it reads GHSHESGHGH…DEPPEENKGS (78 aa). The span at 187–201 shows a compositional bias: basic residues; the sequence is GHSHSHGGGHGHSHG. Basic and acidic residues-rich tracts occupy residues 202–218 and 232–242; these read GGHE…EHGH and CHDEPPEENKG. The helical transmembrane segment at 251–271 threads the bilayer; it reads VFLHIVADALGSVGVIISTIL. Over 272-276 the chain is Lumenal; sequence MQQYG. The chain crosses the membrane as a helical span at residues 277–297; it reads LMIADPICSMLIALLIFVSVI. The Cytoplasmic segment spans residues 298–390; that stretch reads PLLKQSIGIL…LYVQIDLAAM (93 aa).

The protein belongs to the cation diffusion facilitator (CDF) transporter (TC 2.A.4) family. SLC30A subfamily. Homooligomer.

The protein localises to the golgi apparatus membrane. It is found in the cytoplasmic vesicle. The protein resides in the golgi apparatus. It localises to the trans-Golgi network. Its subcellular location is the sarcoplasmic reticulum. The protein localises to the mitochondrion. The enzyme catalyses Zn(2+)(in) = Zn(2+)(out). Zinc ion transporter mediating zinc entry from the cytosol into the lumen of organelles along the secretory pathway. By contributing to zinc ion homeostasis within the early secretory pathway, regulates the activation and folding of enzymes like alkaline phosphatases. This chain is Zinc transporter 7-B (slc30a7-b), found in Xenopus laevis (African clawed frog).